The primary structure comprises 476 residues: Raffinose invertase (476 aa).

Residues 35-38, Q54, 97-98, 159-160, E214, and W297 contribute to the substrate site; these read WMND, FS, and RD. D38 is a catalytic residue.

This sequence belongs to the glycosyl hydrolase 32 family. Homodimer.

The enzyme catalyses Hydrolysis of terminal non-reducing beta-D-fructofuranoside residues in beta-D-fructofuranosides.. Functionally, may prevent the potential hasard of excessive sucrose accumulation. This chain is Raffinose invertase (rafD), found in Escherichia coli.